We begin with the raw amino-acid sequence, 737 residues long: MSKENMSNEGKCPFNHGAAGTNQSSGRGTSNKDWWPNQLNLNILHQHSPKSNPMGEDFDYAKEFNSLDLEAIRQDLFALMTDSQDWWPADYGHYGPFFIRMAWHSAGTYRTADGRGGATSGTQRFAPLNSWPDNVNLDKARRLLWPIKQKYGRKISWADLMILAGNCALESMGFKTFGFAGGRVDVWQPEEDIYWGTEKTWLDDERYTGDRELENPLAAVQMGLIYVNPEGPEGKPDTLASARDIRDTFGRMAMNDEETVALIAGGHTFGKAHGAGDAAQVGADPEAAGIAEQGFGWSNSMGTGKGVDTISSGLEGAWTKSPIAWDNGYFENLFEYDWELTKSPAGAWQWTPKDGAAANSVPDAHDSSKRHAPIMFTSDLALRDDPIYAPISKRFYENPDQLADAFARAWFKLTHRDMGPVARYLGPLVPQEELVWQDPIPAVTYVTVNDQDILDLKAKIQASGLTVAQLVSTAWASASTYRGSDMRGGANGARIRLAPQKDWAVNQPEQLAKVLSVLESIQAEFNRQDSTKQVSLADLIVLGGSVGVEQAAKASGHSVTVPFTAGRADASQEQTDVESFAFLEPAADGFRNYLKGKYTVSAEEMLVDRAQLLTLSAPEMTALLGGLRVLNANVGQSQHGVFTDKPETLSNDFFVNLLDMGTKWFATSEEEEEFQGRDRTTGKIKWTATRADLVFGSNSQLRAIAEVYACSDSQERFVKDFIAAWTKVMELDRFDLA.

The disordered stretch occupies residues 1-32; the sequence is MSKENMSNEGKCPFNHGAAGTNQSSGRGTSNK. The span at 20-32 shows a compositional bias: polar residues; it reads GTNQSSGRGTSNK. Positions 103–226 form a cross-link, tryptophyl-tyrosyl-methioninium (Trp-Tyr) (with M-252); it reads WHSAGTYRTA…LAAVQMGLIY (124 aa). The active-site Proton acceptor is the histidine 104. A cross-link (tryptophyl-tyrosyl-methioninium (Tyr-Met) (with W-103)) is located at residues 226–252; it reads YVNPEGPEGKPDTLASARDIRDTFGRM. Histidine 267 is a heme b binding site.

It belongs to the peroxidase family. Peroxidase/catalase subfamily. Homodimer or homotetramer. Heme b is required as a cofactor. Post-translationally, formation of the three residue Trp-Tyr-Met cross-link is important for the catalase, but not the peroxidase activity of the enzyme.

It carries out the reaction H2O2 + AH2 = A + 2 H2O. It catalyses the reaction 2 H2O2 = O2 + 2 H2O. In terms of biological role, bifunctional enzyme with both catalase and broad-spectrum peroxidase activity. This is Catalase-peroxidase from Marinomonas sp. (strain MWYL1).